Consider the following 529-residue polypeptide: tRNA-2-methylthio-N(6)-dimethylallyladenosine synthase (529 aa).

Residues 18–134 (RTYQVRTYGC…LPTLLERARH (117 aa)) form the MTTase N-terminal domain. [4Fe-4S] cluster-binding residues include Cys-27, Cys-63, Cys-97, Cys-171, Cys-175, and Cys-178. The Radical SAM core domain occupies 157–404 (RESAYAGWVS…IELQERISLE (248 aa)). Residues 407 to 486 (QAQVGRTLEL…PHHLIADGAL (80 aa)) form the TRAM domain.

It belongs to the methylthiotransferase family. MiaB subfamily. Monomer. Requires [4Fe-4S] cluster as cofactor.

The protein localises to the cytoplasm. It catalyses the reaction N(6)-dimethylallyladenosine(37) in tRNA + (sulfur carrier)-SH + AH2 + 2 S-adenosyl-L-methionine = 2-methylsulfanyl-N(6)-dimethylallyladenosine(37) in tRNA + (sulfur carrier)-H + 5'-deoxyadenosine + L-methionine + A + S-adenosyl-L-homocysteine + 2 H(+). Catalyzes the methylthiolation of N6-(dimethylallyl)adenosine (i(6)A), leading to the formation of 2-methylthio-N6-(dimethylallyl)adenosine (ms(2)i(6)A) at position 37 in tRNAs that read codons beginning with uridine. The polypeptide is tRNA-2-methylthio-N(6)-dimethylallyladenosine synthase (Mycobacterium sp. (strain KMS)).